The sequence spans 247 residues: Uridylate kinase (247 aa).

Position 16–19 (16–19) interacts with ATP; sequence KLSG. Glycine 58 provides a ligand contact to UMP. ATP contacts are provided by glycine 59 and arginine 63. UMP-binding positions include aspartate 78 and 139 to 146; that span reads TGNPFFTT. The ATP site is built by threonine 166, tyrosine 172, and aspartate 175.

The protein belongs to the UMP kinase family. As to quaternary structure, homohexamer.

The protein localises to the cytoplasm. The catalysed reaction is UMP + ATP = UDP + ADP. The protein operates within pyrimidine metabolism; CTP biosynthesis via de novo pathway; UDP from UMP (UMPK route): step 1/1. With respect to regulation, inhibited by UTP. Catalyzes the reversible phosphorylation of UMP to UDP. In Xylella fastidiosa (strain Temecula1 / ATCC 700964), this protein is Uridylate kinase.